A 397-amino-acid chain; its full sequence is Neuroplastin (397 aa).

A signal peptide spans 1–28 (MSGSSLPGALALSLLLVSGSLLPGPGAA). 3 consecutive Ig-like domains span residues 29–134 (QNAG…PSIT), 148–234 (PRIV…IEVK), and 237–327 (PDIT…ASVS). The Extracellular segment spans residues 29-338 (QNAGFVKSPM…VLRVRSHLAP (310 aa)). Residues cysteine 52 and cysteine 116 are joined by a disulfide bond. The interval 149–161 (RIVTSEEVIIRES) is narpin; mediates binding with FGFR1 and has antidepressant-like activity. A disulfide bridge connects residues cysteine 169 and cysteine 217. N-linked (GlcNAc...) asparagine glycans are attached at residues asparagine 170, asparagine 196, asparagine 228, asparagine 283, asparagine 295, and asparagine 316. An intrachain disulfide couples cysteine 258 to cysteine 315. The chain crosses the membrane as a helical span at residues 339-359 (LWPFLGILAEIIILVVIIVVY). Residues 360–397 (EKRKRPDEVPDDDEPAGPMKTNSTNNHKDKNLRQRNTN) are Cytoplasmic-facing. Positions 364–397 (RPDEVPDDDEPAGPMKTNSTNNHKDKNLRQRNTN) are disordered.

Interacts with ATP2B1; this interaction stabilizes ATP2B1 and increases ATPase activity; this interaction controls T cell calcium homeostasis following T cell activation. Interacts with XKR8; promoting its localization at the cell membrane. N-glycosylated. Isoform 1 and isoform 2 are widely expressed with variable levels in brain. Isoform 1 is expressed in cerebellum and midbrain. Isoform 1 and isoform 2 are expressed in cerebral cortex, hippocampus and striatum. Isoform 2 is more abundant in the cerebral cortex than isoform 1.

It localises to the cell membrane. It is found in the postsynaptic density. Functionally, probable homophilic and heterophilic cell adhesion molecule involved in long term potentiation at hippocampal excitatory synapses through activation of p38MAPK. May also regulate neurite outgrowth by activating the FGFR1 signaling pathway. May play a role in synaptic plasticity. Also acts as a chaperone for ATP2B1; stabilizes ATP2B1 and increases its ATPase activity. Promotes localization of XKR8 at the cell membrane. This is Neuroplastin (Nptn) from Mus musculus (Mouse).